The chain runs to 531 residues: Plant UBX domain-containing protein 11 (531 aa).

Met1 is subject to N-acetylmethionine. The segment covering 160-173 (AVASPSTASSVQPS) has biased composition (low complexity). Disordered regions lie at residues 160-316 (AVAS…KASD) and 441-531 (ANAS…NDRR). Polar residues-rich tracts occupy residues 174-190 (ETKS…NNDG) and 201-214 (EPSN…NQPA). Residues 290 to 301 (VDTKETMKPKDE) show a composition bias toward basic and acidic residues. One can recognise a UBX domain in the interval 312–390 (KKASDVHLNI…RLFDRQALVV (79 aa)). 2 stretches are compositionally biased toward polar residues: residues 441-478 (ANAS…GRSN) and 486-496 (TSRIGSNIHTL).

As to quaternary structure, interacts with CDC48A.

The chain is Plant UBX domain-containing protein 11 from Arabidopsis thaliana (Mouse-ear cress).